Consider the following 88-residue polypeptide: Small ribosomal subunit protein uS15 (88 aa).

This sequence belongs to the universal ribosomal protein uS15 family. As to quaternary structure, part of the 30S ribosomal subunit. Forms a bridge to the 50S subunit in the 70S ribosome, contacting the 23S rRNA.

One of the primary rRNA binding proteins, it binds directly to 16S rRNA where it helps nucleate assembly of the platform of the 30S subunit by binding and bridging several RNA helices of the 16S rRNA. In terms of biological role, forms an intersubunit bridge (bridge B4) with the 23S rRNA of the 50S subunit in the ribosome. In Flavobacterium johnsoniae (strain ATCC 17061 / DSM 2064 / JCM 8514 / BCRC 14874 / CCUG 350202 / NBRC 14942 / NCIMB 11054 / UW101) (Cytophaga johnsonae), this protein is Small ribosomal subunit protein uS15.